We begin with the raw amino-acid sequence, 262 residues long: Thiazole synthase (262 aa).

Lys104 functions as the Schiff-base intermediate with DXP in the catalytic mechanism. 1-deoxy-D-xylulose 5-phosphate is bound by residues Gly165, 191–192 (AG), and 213–214 (NT).

The protein belongs to the ThiG family. Homotetramer. Forms heterodimers with either ThiH or ThiS.

The protein resides in the cytoplasm. The catalysed reaction is [ThiS sulfur-carrier protein]-C-terminal-Gly-aminoethanethioate + 2-iminoacetate + 1-deoxy-D-xylulose 5-phosphate = [ThiS sulfur-carrier protein]-C-terminal Gly-Gly + 2-[(2R,5Z)-2-carboxy-4-methylthiazol-5(2H)-ylidene]ethyl phosphate + 2 H2O + H(+). It functions in the pathway cofactor biosynthesis; thiamine diphosphate biosynthesis. In terms of biological role, catalyzes the rearrangement of 1-deoxy-D-xylulose 5-phosphate (DXP) to produce the thiazole phosphate moiety of thiamine. Sulfur is provided by the thiocarboxylate moiety of the carrier protein ThiS. In vitro, sulfur can be provided by H(2)S. This chain is Thiazole synthase, found in Alkalilimnicola ehrlichii (strain ATCC BAA-1101 / DSM 17681 / MLHE-1).